A 422-amino-acid polypeptide reads, in one-letter code: MNPLTIFCLVAVLLSAATAHRGSNAIRNNLQPSGXLSPRELEDMPAINEITFEKLQEMPAEEAADLVNKIYHLSQMSRNIEPSYAPSPNQIPAYTYTPTGQRVNFNLNQLVATAQQQPNFGKQEVTVFITGLPNKSSAMLTANQKLVQAYLQAYNGRVQVQGEQGDDSNQDTSSSEESSNRPNGQQPKPNGNLVVIDLGAVIRNFEDLVLLDINRVGAAIGNSLVQLTAQADVPQEVINIVAQGIAAHVAGAAARQYTRQTGNTLRRITAMDPSKIYARKPNTLVGLARGNADFVDAIHTSAYGLGTTTRAGDVDFYPNGPSVNMPGTDDIIEASLRATRYLAETVLPGNDRNFPAVAAESLQQYKNNNGNGRRAYMGIAADYDLEGDYILQVNAKSPFGKSAPAQKQNSYHGIHQGAGRPN.

An N-terminal signal peptide occupies residues 1–20 (MNPLTIFCLVAVLLSAATAH). Disordered regions lie at residues 161 to 191 (QGEQGDDSNQDTSSSEESSNRPNGQQPKPNG) and 399 to 422 (FGKSAPAQKQNSYHGIHQGAGRPN). Polar residues predominate over residues 180-189 (NRPNGQQPKP).

It belongs to the AB hydrolase superfamily. Lipase family. Synthesized in the fat body and ovarian follicle cells and accumulate in the oocyte.

It is found in the secreted. Its function is as follows. Vitellogenin is the major yolk protein of eggs where it is used as a food source during embryogenesis. This is Vitellogenin-2 (VG2-delta) from Ceratitis capitata (Mediterranean fruit fly).